The chain runs to 93 residues: Small ribosomal subunit protein uS19 (93 aa).

This sequence belongs to the universal ribosomal protein uS19 family.

Its function is as follows. Protein S19 forms a complex with S13 that binds strongly to the 16S ribosomal RNA. The sequence is that of Small ribosomal subunit protein uS19 from Pseudarthrobacter chlorophenolicus (strain ATCC 700700 / DSM 12829 / CIP 107037 / JCM 12360 / KCTC 9906 / NCIMB 13794 / A6) (Arthrobacter chlorophenolicus).